The primary structure comprises 446 residues: MQKKYFGTDGIRGKVGNSLINAEFMLKLGWAVGRVLANSHSATVLIGKDTRISGYMIESALQAGLSAAGVNIKLTGPMPTPAIAYLTNSVRADAGIVISASHNHYPDNGVKFFNKDGFKLSDELELAIEKQIDKPMKTVVADRLGKAARMNEAHGRYIEFCKSTFPSNLTLKGLKIVVDCANGAAYAVAPSIFHELGAEVVAIADDPDGFNINQTCGATDTAHLQEMVVKHNADVGIAFDGDGDRLIMVDHHGLRVDGDELLCIMAIDRFYLKENAPLGVVGTIMSNLGLEQTLKRHHIAFERSPVGDRYVLDLMQQKGWFLGGESSGHIVDLGFTTTGDGVITALQILRIMQQAEKPLADLKKVMVKNPQVLINVPIKGILDIAQNPNIKKAITEAEKQLNGAGRILLRPSGTEPVIRVMVEGSDEGIVRQTAEMLAAAVQQSTL.

The active-site Phosphoserine intermediate is the S101. Mg(2+)-binding residues include S101, D240, D242, and D244. S101 carries the phosphoserine modification.

The protein belongs to the phosphohexose mutase family. Requires Mg(2+) as cofactor. Post-translationally, activated by phosphorylation.

It catalyses the reaction alpha-D-glucosamine 1-phosphate = D-glucosamine 6-phosphate. Functionally, catalyzes the conversion of glucosamine-6-phosphate to glucosamine-1-phosphate. The sequence is that of Phosphoglucosamine mutase from Coxiella burnetii (strain Dugway 5J108-111).